The primary structure comprises 275 residues: NH(3)-dependent NAD(+) synthetase (275 aa).

Gly46–Ser53 serves as a coordination point for ATP. Position 52 (Asp52) interacts with Mg(2+). Arg140 contacts deamido-NAD(+). Thr160 serves as a coordination point for ATP. Residue Glu165 coordinates Mg(2+). Deamido-NAD(+)-binding residues include Lys173 and Asp180. 2 residues coordinate ATP: Lys189 and Thr211. Deamido-NAD(+) is bound at residue His260–Lys261.

The protein belongs to the NAD synthetase family. Homodimer.

It carries out the reaction deamido-NAD(+) + NH4(+) + ATP = AMP + diphosphate + NAD(+) + H(+). It participates in cofactor biosynthesis; NAD(+) biosynthesis; NAD(+) from deamido-NAD(+) (ammonia route): step 1/1. Functionally, catalyzes the ATP-dependent amidation of deamido-NAD to form NAD. Uses ammonia as a nitrogen source. This is NH(3)-dependent NAD(+) synthetase from Escherichia coli O6:K15:H31 (strain 536 / UPEC).